The primary structure comprises 328 residues: Alcohol-sensitive RING finger protein 1 (328 aa).

The RING-type 1; atypical zinc-finger motif lies at 18 to 61; that stretch reads CSICWESMPSGVGRLMPCGHEYHLACIRKWFHLHSGNRSCPVCR. The RING-type 2; atypical zinc finger occupies 129–177; sequence CGICGEMNGDIDTCCNRCHHMYHHSCLGQLLVEVNAEREQGWSHCIFCY.

It is found in the cytoplasm. The protein resides in the nucleus. Required for tolerance to alcohol. The protein is Alcohol-sensitive RING finger protein 1 (ASR1) of Eremothecium gossypii (strain ATCC 10895 / CBS 109.51 / FGSC 9923 / NRRL Y-1056) (Yeast).